Reading from the N-terminus, the 384-residue chain is dTDP-dihydrostreptose--streptidine-6-phosphate dihydrostreptosyltransferase (384 aa).

It carries out the reaction dTDP-L-dihydrostreptose + streptidine 6-phosphate = O-(1-&gt;4)-alpha-L-dihydrostreptosyl-streptidine 6-phosphate + dTDP + H(+). The protein operates within antibiotic biosynthesis; streptomycin biosynthesis. In terms of biological role, is probably a dihydrostreptosyl glycosyltransferase, involved in the first glycosylation step condensing streptidine-6-phosphate and dihydrostreptose. The protein is dTDP-dihydrostreptose--streptidine-6-phosphate dihydrostreptosyltransferase (strH) of Streptomyces griseus.